The primary structure comprises 224 residues: Ribonuclease HII (224 aa).

Residues glycine 17–valine 201 form the RNase H type-2 domain. Residues aspartate 23, glutamate 24, and aspartate 111 each contribute to the a divalent metal cation site.

It belongs to the RNase HII family. Mn(2+) is required as a cofactor. Mg(2+) serves as cofactor.

The protein localises to the cytoplasm. The enzyme catalyses Endonucleolytic cleavage to 5'-phosphomonoester.. In terms of biological role, endonuclease that specifically degrades the RNA of RNA-DNA hybrids. The sequence is that of Ribonuclease HII from Pseudothermotoga lettingae (strain ATCC BAA-301 / DSM 14385 / NBRC 107922 / TMO) (Thermotoga lettingae).